The primary structure comprises 349 residues: Polyamine aminopropyltransferase 2 (349 aa).

Residues 29–267 (DGAITAIEDS…SSWGFLLASD (239 aa)) form the PABS domain. Q60 is an S-methyl-5'-thioadenosine binding site. H91 and E115 together coordinate spermidine. Residues D135 and 167-168 (DG) each bind S-methyl-5'-thioadenosine. The active-site Proton acceptor is the D185. P194 serves as a coordination point for S-methyl-5'-thioadenosine.

Belongs to the spermidine/spermine synthase family. In terms of assembly, homodimer or homotetramer.

It is found in the cytoplasm. The enzyme catalyses S-adenosyl 3-(methylsulfanyl)propylamine + putrescine = S-methyl-5'-thioadenosine + spermidine + H(+). It functions in the pathway amine and polyamine biosynthesis; spermidine biosynthesis; spermidine from putrescine: step 1/1. Catalyzes the irreversible transfer of a propylamine group from the amino donor S-adenosylmethioninamine (decarboxy-AdoMet) to putrescine (1,4-diaminobutane) to yield spermidine. The chain is Polyamine aminopropyltransferase 2 from Pseudomonas aeruginosa (strain ATCC 15692 / DSM 22644 / CIP 104116 / JCM 14847 / LMG 12228 / 1C / PRS 101 / PAO1).